The following is a 382-amino-acid chain: Lipid-A-disaccharide synthase (382 aa).

Belongs to the LpxB family.

The enzyme catalyses 2-N,3-O-bis[(3R)-3-hydroxytetradecanoyl]-alpha-D-glucosaminyl 1-phosphate + UDP-2-N,3-O-bis[(3R)-3-hydroxytetradecanoyl]-alpha-D-glucosamine = lipid A disaccharide (E. coli) + UDP + H(+). The catalysed reaction is a lipid X + a UDP-2-N,3-O-bis[(3R)-3-hydroxyacyl]-alpha-D-glucosamine = a lipid A disaccharide + UDP + H(+). Its pathway is glycolipid biosynthesis; lipid IV(A) biosynthesis; lipid IV(A) from (3R)-3-hydroxytetradecanoyl-[acyl-carrier-protein] and UDP-N-acetyl-alpha-D-glucosamine: step 5/6. In terms of biological role, condensation of UDP-2,3-diacylglucosamine and 2,3-diacylglucosamine-1-phosphate to form lipid A disaccharide, a precursor of lipid A, a phosphorylated glycolipid that anchors the lipopolysaccharide to the outer membrane of the cell. This chain is Lipid-A-disaccharide synthase, found in Shigella dysenteriae serotype 1 (strain Sd197).